The sequence spans 493 residues: Glutamyl-tRNA(Gln) amidotransferase subunit A (493 aa).

Catalysis depends on charge relay system residues lysine 78 and serine 158. Residue serine 182 is the Acyl-ester intermediate of the active site.

This sequence belongs to the amidase family. GatA subfamily. As to quaternary structure, heterotrimer of A, B and C subunits.

The catalysed reaction is L-glutamyl-tRNA(Gln) + L-glutamine + ATP + H2O = L-glutaminyl-tRNA(Gln) + L-glutamate + ADP + phosphate + H(+). Its function is as follows. Allows the formation of correctly charged Gln-tRNA(Gln) through the transamidation of misacylated Glu-tRNA(Gln) in organisms which lack glutaminyl-tRNA synthetase. The reaction takes place in the presence of glutamine and ATP through an activated gamma-phospho-Glu-tRNA(Gln). This Rickettsia rickettsii (strain Iowa) protein is Glutamyl-tRNA(Gln) amidotransferase subunit A.